A 131-amino-acid polypeptide reads, in one-letter code: MNLIQTLEKEQFDKLSAGKTIPEFGPGDTVIVNVKVVEGERSRVQAYEGVCIGRSGGGINESFTVRKISYGEGVERVFPLLSPMIDSIKVVRRGKVRRAKLYYLRNLRGKSARIVEKKQDRPAKVAAGAAE.

Belongs to the bacterial ribosomal protein bL19 family.

In terms of biological role, this protein is located at the 30S-50S ribosomal subunit interface and may play a role in the structure and function of the aminoacyl-tRNA binding site. This chain is Large ribosomal subunit protein bL19, found in Rhodopseudomonas palustris (strain HaA2).